We begin with the raw amino-acid sequence, 370 residues long: N-acetyltaurine hydrolase (370 aa).

Residues histidine 26, histidine 28, glutamate 189, histidine 221, histidine 250, and aspartate 318 each contribute to the a divalent metal cation site.

The protein belongs to the metallo-dependent hydrolases superfamily. Phosphotriesterase family. A divalent metal cation serves as cofactor.

Its subcellular location is the cytoplasm. It localises to the cytosol. The catalysed reaction is N-acetyltaurine + H2O = taurine + acetate. In terms of biological role, N-acetyltaurine hydrolase catalyzes the hydrolysis of N-acetyltaurine into taurine and acetate. This chain is N-acetyltaurine hydrolase (pter), found in Dictyostelium discoideum (Social amoeba).